A 239-amino-acid chain; its full sequence is MSRLPQRRALVLLSGGQDSATCLAWALARYGHVETLGFDYGQRHRVELDCRQRLIDGVRALPWPGQLGPDHMLTVDVLAQLGGSAMTDDVAIAMQADGLPNTFVPGRNLLFFTLAAALAYRRGLDVLVGGMSETDYSGYPDCRDSTLKALQVALSLGVDRPLTLETPLMWRSKADTWALAQRLGGDALVELIRCESHTCYLGQRGDLHAWGHGCGGCPACELRAQGWEQWTAQRSLNGA.

13–23 serves as a coordination point for ATP; it reads LSGGQDSATCL. Residues C199, C214, C217, and C220 each coordinate Zn(2+).

Belongs to the QueC family. The cofactor is Zn(2+).

The enzyme catalyses 7-carboxy-7-deazaguanine + NH4(+) + ATP = 7-cyano-7-deazaguanine + ADP + phosphate + H2O + H(+). The protein operates within purine metabolism; 7-cyano-7-deazaguanine biosynthesis. Functionally, catalyzes the ATP-dependent conversion of 7-carboxy-7-deazaguanine (CDG) to 7-cyano-7-deazaguanine (preQ(0)). This Acidovorax ebreus (strain TPSY) (Diaphorobacter sp. (strain TPSY)) protein is 7-cyano-7-deazaguanine synthase.